A 391-amino-acid chain; its full sequence is NADH-quinone oxidoreductase subunit D (391 aa).

This sequence belongs to the complex I 49 kDa subunit family. In terms of assembly, NDH-1 is composed of 14 different subunits. Subunits NuoB, C, D, E, F, and G constitute the peripheral sector of the complex.

It localises to the cell inner membrane. It carries out the reaction a quinone + NADH + 5 H(+)(in) = a quinol + NAD(+) + 4 H(+)(out). In terms of biological role, NDH-1 shuttles electrons from NADH, via FMN and iron-sulfur (Fe-S) centers, to quinones in the respiratory chain. The immediate electron acceptor for the enzyme in this species is believed to be ubiquinone. Couples the redox reaction to proton translocation (for every two electrons transferred, four hydrogen ions are translocated across the cytoplasmic membrane), and thus conserves the redox energy in a proton gradient. This chain is NADH-quinone oxidoreductase subunit D, found in Pelagibacter ubique (strain HTCC1062).